The primary structure comprises 330 residues: Beta-ketoacyl-[acyl-carrier-protein] synthase III (330 aa).

Residues Cys-115 and His-255 contribute to the active site. Residues 256 to 260 (QANFR) are ACP-binding. Asn-285 is a catalytic residue.

It belongs to the thiolase-like superfamily. FabH family. As to quaternary structure, homodimer.

Its subcellular location is the cytoplasm. The enzyme catalyses malonyl-[ACP] + acetyl-CoA + H(+) = 3-oxobutanoyl-[ACP] + CO2 + CoA. The protein operates within lipid metabolism; fatty acid biosynthesis. Functionally, catalyzes the condensation reaction of fatty acid synthesis by the addition to an acyl acceptor of two carbons from malonyl-ACP. Catalyzes the first condensation reaction which initiates fatty acid synthesis and may therefore play a role in governing the total rate of fatty acid production. Possesses both acetoacetyl-ACP synthase and acetyl transacylase activities. Its substrate specificity determines the biosynthesis of branched-chain and/or straight-chain of fatty acids. The sequence is that of Beta-ketoacyl-[acyl-carrier-protein] synthase III from Helicobacter pylori (strain HPAG1).